Consider the following 439-residue polypeptide: Adenylosuccinate synthetase (439 aa).

GTP-binding positions include 25–31 (GDEGKGK), 53–55 (GHT), and K62. Residue D26 is the Proton acceptor of the active site. Mg(2+)-binding residues include D26 and G53. IMP contacts are provided by residues 26 to 29 (DEGK) and 51 to 54 (NAGH). H54 serves as the catalytic Proton donor. IMP is bound by residues T141, R155, N232, and T247. T307 is a GTP binding site. 307–313 (TTTNRPR) serves as a coordination point for substrate. Residue R311 participates in IMP binding. GTP is bound by residues R313, 339-341 (KLD), and 425-427 (GVG).

Belongs to the adenylosuccinate synthetase family. As to quaternary structure, homodimer. It depends on Mg(2+) as a cofactor.

Its subcellular location is the cytoplasm. The catalysed reaction is IMP + L-aspartate + GTP = N(6)-(1,2-dicarboxyethyl)-AMP + GDP + phosphate + 2 H(+). The protein operates within purine metabolism; AMP biosynthesis via de novo pathway; AMP from IMP: step 1/2. Its function is as follows. Plays an important role in the salvage pathway for purine nucleotide biosynthesis. Catalyzes the first commited step in the biosynthesis of AMP from IMP. In Plasmodium chabaudi chabaudi, this protein is Adenylosuccinate synthetase.